Reading from the N-terminus, the 251-residue chain is CDP-diacylglycerol pyrophosphatase (251 aa).

A helical membrane pass occupies residues 4 to 24 (AGLLFLVMIVIAVVAAGIGYW).

It belongs to the Cdh family.

Its subcellular location is the cell inner membrane. The catalysed reaction is a CDP-1,2-diacyl-sn-glycerol + H2O = a 1,2-diacyl-sn-glycero-3-phosphate + CMP + 2 H(+). Its pathway is phospholipid metabolism; CDP-diacylglycerol degradation; phosphatidate from CDP-diacylglycerol: step 1/1. This Shigella flexneri protein is CDP-diacylglycerol pyrophosphatase.